The chain runs to 431 residues: Dihydroorotase (431 aa).

Positions 55 and 57 each coordinate Zn(2+). Residues 57–59 and N89 contribute to the substrate site; that span reads HFR. Positions 139, 169, 223, and 290 each coordinate Zn(2+). K139 is subject to N6-carboxylysine. Residue D290 is part of the active site. Substrate is bound by residues H294 and 308 to 309; that span reads PG.

It belongs to the metallo-dependent hydrolases superfamily. DHOase family. Class I DHOase subfamily. It depends on Zn(2+) as a cofactor.

It carries out the reaction (S)-dihydroorotate + H2O = N-carbamoyl-L-aspartate + H(+). Its pathway is pyrimidine metabolism; UMP biosynthesis via de novo pathway; (S)-dihydroorotate from bicarbonate: step 3/3. In terms of biological role, catalyzes the reversible cyclization of carbamoyl aspartate to dihydroorotate. The sequence is that of Dihydroorotase from Methanothermobacter thermautotrophicus (strain ATCC 29096 / DSM 1053 / JCM 10044 / NBRC 100330 / Delta H) (Methanobacterium thermoautotrophicum).